A 294-amino-acid polypeptide reads, in one-letter code: Glycine--tRNA ligase alpha subunit (294 aa).

This sequence belongs to the class-II aminoacyl-tRNA synthetase family. In terms of assembly, tetramer of two alpha and two beta subunits.

The protein resides in the cytoplasm. It catalyses the reaction tRNA(Gly) + glycine + ATP = glycyl-tRNA(Gly) + AMP + diphosphate. The polypeptide is Glycine--tRNA ligase alpha subunit (Sulfurovum sp. (strain NBC37-1)).